The sequence spans 131 residues: Profilin-1 (131 aa).

Belongs to the profilin family. As to quaternary structure, occurs in many kinds of cells as a complex with monomeric actin in a 1:1 ratio.

The protein resides in the cytoplasm. It localises to the cytoskeleton. Functionally, binds to actin and affects the structure of the cytoskeleton. At high concentrations, profilin prevents the polymerization of actin, whereas it enhances it at low concentrations. By binding to PIP2, it inhibits the formation of IP3 and DG. The sequence is that of Profilin-1 from Hevea brasiliensis (Para rubber tree).